We begin with the raw amino-acid sequence, 116 residues long: Large ribosomal subunit protein bL21c (116 aa).

Belongs to the bacterial ribosomal protein bL21 family. In terms of assembly, part of the 50S ribosomal subunit.

The protein resides in the plastid. It is found in the chloroplast. Its function is as follows. This protein binds to 23S rRNA. The sequence is that of Large ribosomal subunit protein bL21c from Emiliania huxleyi (Coccolithophore).